The sequence spans 29 residues: Cyclotide vibi-A (29 aa).

The segment at residues 1-29 (GLPVCGETCFGGTCNTPGCSCSYPICTRN) is a cross-link (cyclopeptide (Gly-Asn)). 3 disulfides stabilise this stretch: Cys5–Cys19, Cys9–Cys21, and Cys14–Cys26.

Post-translationally, this is a cyclic peptide.

Its function is as follows. Probably participates in a plant defense mechanism. This is Cyclotide vibi-A from Viola biflora (Yellow wood violet).